A 268-amino-acid chain; its full sequence is Ribosomal RNA small subunit methyltransferase A (268 aa).

S-adenosyl-L-methionine is bound by residues N10, I12, G37, E58, D83, and N107.

The protein belongs to the class I-like SAM-binding methyltransferase superfamily. rRNA adenine N(6)-methyltransferase family. RsmA subfamily.

It localises to the cytoplasm. The enzyme catalyses adenosine(1518)/adenosine(1519) in 16S rRNA + 4 S-adenosyl-L-methionine = N(6)-dimethyladenosine(1518)/N(6)-dimethyladenosine(1519) in 16S rRNA + 4 S-adenosyl-L-homocysteine + 4 H(+). Functionally, specifically dimethylates two adjacent adenosines (A1518 and A1519) in the loop of a conserved hairpin near the 3'-end of 16S rRNA in the 30S particle. May play a critical role in biogenesis of 30S subunits. This Caldanaerobacter subterraneus subsp. tengcongensis (strain DSM 15242 / JCM 11007 / NBRC 100824 / MB4) (Thermoanaerobacter tengcongensis) protein is Ribosomal RNA small subunit methyltransferase A.